We begin with the raw amino-acid sequence, 331 residues long: Ribose-phosphate pyrophosphokinase (331 aa).

Position 55–57 (55–57) interacts with ATP; the sequence is DGE. Mg(2+) is bound by residues H148 and D187. The active site involves K211. D-ribose 5-phosphate is bound by residues R213, D237, and 241–245; that span reads DTAGT.

The protein belongs to the ribose-phosphate pyrophosphokinase family. Class I subfamily. As to quaternary structure, homohexamer. Requires Mg(2+) as cofactor.

The protein resides in the cytoplasm. It carries out the reaction D-ribose 5-phosphate + ATP = 5-phospho-alpha-D-ribose 1-diphosphate + AMP + H(+). The protein operates within metabolic intermediate biosynthesis; 5-phospho-alpha-D-ribose 1-diphosphate biosynthesis; 5-phospho-alpha-D-ribose 1-diphosphate from D-ribose 5-phosphate (route I): step 1/1. Involved in the biosynthesis of the central metabolite phospho-alpha-D-ribosyl-1-pyrophosphate (PRPP) via the transfer of pyrophosphoryl group from ATP to 1-hydroxyl of ribose-5-phosphate (Rib-5-P). In Synechococcus elongatus (strain ATCC 33912 / PCC 7942 / FACHB-805) (Anacystis nidulans R2), this protein is Ribose-phosphate pyrophosphokinase.